A 372-amino-acid chain; its full sequence is NAD(P)H-quinone oxidoreductase subunit 1 (372 aa).

Helical transmembrane passes span 29–49 (WLPF…LVTV), 97–117 (LLFT…YLVV), 128–148 (LGVA…GLLM), 176–196 (LALA…IDIV), 204–224 (ILGW…IAVL), 254–274 (FALY…LVAV), 308–328 (TLGI…AVLL), and 351–371 (VALV…FAFG).

This sequence belongs to the complex I subunit 1 family. In terms of assembly, NDH-1 is composed of at least 11 different subunits.

It localises to the cellular thylakoid membrane. It carries out the reaction a plastoquinone + NADH + (n+1) H(+)(in) = a plastoquinol + NAD(+) + n H(+)(out). The catalysed reaction is a plastoquinone + NADPH + (n+1) H(+)(in) = a plastoquinol + NADP(+) + n H(+)(out). Functionally, NDH-1 shuttles electrons from an unknown electron donor, via FMN and iron-sulfur (Fe-S) centers, to quinones in the respiratory and/or the photosynthetic chain. The immediate electron acceptor for the enzyme in this species is believed to be plastoquinone. Couples the redox reaction to proton translocation, and thus conserves the redox energy in a proton gradient. In Trichodesmium erythraeum (strain IMS101), this protein is NAD(P)H-quinone oxidoreductase subunit 1.